The sequence spans 390 residues: Endonuclease 8-like 1 (390 aa).

P2 functions as the Schiff-base intermediate with DNA in the catalytic mechanism. The active-site Proton donor is E3. Catalysis depends on K54, which acts as the Proton donor; for beta-elimination activity. Residue N176 coordinates DNA. Residues 278-390 (TIWFQGDPGP…SLEPEGTSAS (113 aa)) form a disordered region. Residues 291-301 (KGRKSRKKKSK) are compositionally biased toward basic residues. The segment covering 335-347 (TATQRPEGTSLQQ) has biased composition (polar residues). Residue R339 participates in DNA binding. R339 functions as the Proton donor; for delta-elimination activity in the catalytic mechanism.

The protein belongs to the FPG family. In terms of tissue distribution, ubiquitous.

The protein localises to the cytoplasm. Its subcellular location is the cytoskeleton. It is found in the microtubule organizing center. It localises to the centrosome. The protein resides in the nucleus. The protein localises to the chromosome. It carries out the reaction 2'-deoxyribonucleotide-(2'-deoxyribose 5'-phosphate)-2'-deoxyribonucleotide-DNA = a 3'-end 2'-deoxyribonucleotide-(2,3-dehydro-2,3-deoxyribose 5'-phosphate)-DNA + a 5'-end 5'-phospho-2'-deoxyribonucleoside-DNA + H(+). Its function is as follows. Involved in base excision repair of DNA damaged by oxidation or by mutagenic agents. Acts as a DNA glycosylase that recognizes and removes damaged bases. Has a preference for oxidized pyrimidines, such as thymine glycol, formamidopyrimidine (Fapy) and 5-hydroxyuracil. Has marginal activity towards 8-oxoguanine. Has AP (apurinic/apyrimidinic) lyase activity and introduces nicks in the DNA strand. Cleaves the DNA backbone by beta-delta elimination to generate a single-strand break at the site of the removed base with both 3'- and 5'-phosphates. Has DNA glycosylase/lyase activity towards mismatched uracil and thymine, in particular in U:C and T:C mismatches. Specifically binds 5-hydroxymethylcytosine (5hmC), suggesting that it acts as a specific reader of 5hmC. The sequence is that of Endonuclease 8-like 1 (NEIL1) from Homo sapiens (Human).